Reading from the N-terminus, the 207-residue chain is Hydrogenase expression/formation protein HoxM (207 aa).

E19, D65, and H96 together coordinate Ni(2+).

Belongs to the peptidase A31 family.

Functionally, not known. Could be involved in the processing of hydrogenase. This chain is Hydrogenase expression/formation protein HoxM (hoxM), found in Azotobacter vinelandii.